Here is a 117-residue protein sequence, read N- to C-terminus: Large ribosomal subunit protein eL34 (117 aa).

Ser-12 bears the Phosphoserine mark. N6-acetyllysine occurs at positions 36 and 43. Lys-108 is covalently cross-linked (Glycyl lysine isopeptide (Lys-Gly) (interchain with G-Cter in SUMO2)).

The protein belongs to the eukaryotic ribosomal protein eL34 family. Component of the large ribosomal subunit.

Its subcellular location is the cytoplasm. The protein resides in the cytosol. The protein localises to the endoplasmic reticulum. Its function is as follows. Component of the large ribosomal subunit. The ribosome is a large ribonucleoprotein complex responsible for the synthesis of proteins in the cell. This Rattus norvegicus (Rat) protein is Large ribosomal subunit protein eL34 (Rpl34).